Here is a 406-residue protein sequence, read N- to C-terminus: Ubiquitin-associated domain-containing protein 1 (406 aa).

In terms of domain architecture, Ubiquitin-like spans 14–98 (LRLHICSLDG…LLLVKKRAPP (85 aa)). The interval 95–122 (RAPPPTPKMAEVSADEKRKQDQKAPDKD) is disordered. The segment covering 108–122 (ADEKRKQDQKAPDKD) has biased composition (basic and acidic residues). One can recognise a UBA 1 domain in the interval 186–231 (EDDEDRVDEVALRQLTEMGFPESRAVKALRLNHMSVTQAMEWLIEH). Low complexity predominate over residues 238–257 (DAPLPCENSSEAAGGLATGE). Positions 238-272 (DAPLPCENSSEAAGGLATGEAETKPTLGAGAEDPK) are disordered. The UBA 2 domain occupies 289 to 329 (RPDPRAVIALMEMGFDEKEVIDALRVNNNQQDAACEWLLGD). Positions 354–393 (NPVVQLGLTNPKTLLAFEDMLENPLNSTQWMNDPETGPVM) constitute an STI1 domain.

In terms of assembly, component of the KPC complex.

It localises to the cytoplasm. It functions in the pathway protein modification; protein ubiquitination. In terms of biological role, non-catalytic component of the KPC complex, a E3 ubiquitin-protein ligase complex that mediates polyubiquitination of target proteins, such as CDKN1B and NFKB1. Within the KPC complex, UBAC1 acts as an adapter that promotes the transfer of target proteins that have been polyubiquitinated by RNF123/KPC1 to the 26S proteasome. The chain is Ubiquitin-associated domain-containing protein 1 (ubac1) from Xenopus tropicalis (Western clawed frog).